The sequence spans 208 residues: Adenylate kinase (208 aa).

10–15 (GAGKGT) contributes to the ATP binding site. Positions 30 to 59 (STGEMLRAAVAAGTPVGLKAKDVMASGGLV) are NMP. AMP contacts are provided by residues T31, R36, 57-59 (GLV), 85-88 (GFPR), and Q92. Residues 126–142 (SRVAEMTARGEQVRADD) are LID. R127 provides a ligand contact to ATP. AMP is bound by residues R139 and R150. M178 serves as a coordination point for ATP.

The protein belongs to the adenylate kinase family. As to quaternary structure, monomer.

The protein localises to the cytoplasm. It catalyses the reaction AMP + ATP = 2 ADP. The protein operates within purine metabolism; AMP biosynthesis via salvage pathway; AMP from ADP: step 1/1. Its function is as follows. Catalyzes the reversible transfer of the terminal phosphate group between ATP and AMP. Plays an important role in cellular energy homeostasis and in adenine nucleotide metabolism. The sequence is that of Adenylate kinase from Nitrobacter hamburgensis (strain DSM 10229 / NCIMB 13809 / X14).